We begin with the raw amino-acid sequence, 92 residues long: uncharacterized protein (92 aa).

In terms of domain architecture, HMA spans 24 to 89 (KQIVLKVKEM…AIHKLKYTAE (66 aa)). Cys-35 and Cys-38 together coordinate a metal cation.

This is an uncharacterized protein from Haemophilus influenzae (strain ATCC 51907 / DSM 11121 / KW20 / Rd).